The chain runs to 258 residues: Ubiquinone/menaquinone biosynthesis C-methyltransferase UbiE (258 aa).

Residues Thr81, Asp102, and 130–131 (NA) contribute to the S-adenosyl-L-methionine site.

It belongs to the class I-like SAM-binding methyltransferase superfamily. MenG/UbiE family.

It catalyses the reaction a 2-demethylmenaquinol + S-adenosyl-L-methionine = a menaquinol + S-adenosyl-L-homocysteine + H(+). It carries out the reaction a 2-methoxy-6-(all-trans-polyprenyl)benzene-1,4-diol + S-adenosyl-L-methionine = a 5-methoxy-2-methyl-3-(all-trans-polyprenyl)benzene-1,4-diol + S-adenosyl-L-homocysteine + H(+). It functions in the pathway quinol/quinone metabolism; menaquinone biosynthesis; menaquinol from 1,4-dihydroxy-2-naphthoate: step 2/2. Its pathway is cofactor biosynthesis; ubiquinone biosynthesis. In terms of biological role, methyltransferase required for the conversion of demethylmenaquinol (DMKH2) to menaquinol (MKH2) and the conversion of 2-polyprenyl-6-methoxy-1,4-benzoquinol (DDMQH2) to 2-polyprenyl-3-methyl-6-methoxy-1,4-benzoquinol (DMQH2). This chain is Ubiquinone/menaquinone biosynthesis C-methyltransferase UbiE, found in Rhizobium meliloti (strain 1021) (Ensifer meliloti).